We begin with the raw amino-acid sequence, 105 residues long: Integration host factor subunit beta (105 aa).

This sequence belongs to the bacterial histone-like protein family. As to quaternary structure, heterodimer of an alpha and a beta chain.

Functionally, this protein is one of the two subunits of integration host factor, a specific DNA-binding protein that functions in genetic recombination as well as in transcriptional and translational control. The sequence is that of Integration host factor subunit beta from Nitrosomonas europaea (strain ATCC 19718 / CIP 103999 / KCTC 2705 / NBRC 14298).